Here is a 328-residue protein sequence, read N- to C-terminus: Carbonic anhydrase-related protein 11 (328 aa).

Positions 1 to 23 (MGAAARLSAPRALVLWAALGAAA) are cleaved as a signal peptide. The Alpha-carbonic anhydrase domain occupies 33–303 (DWWSYKDNLQ…LAHRALRGNR (271 aa)). N-linked (GlcNAc...) asparagine glycans are attached at residues N118, N170, and N260. Residues 299–328 (LRGNRDPRHPERRCRGPNYRLHVDGVPHGR) form a disordered region. Positions 319–328 (LHVDGVPHGR) are enriched in basic and acidic residues.

The protein belongs to the alpha-carbonic anhydrase family. As to expression, expressed abundantly in the brain with moderate expression also present in spinal cord and thyroid.

Its subcellular location is the secreted. Functionally, does not have a catalytic activity. This Homo sapiens (Human) protein is Carbonic anhydrase-related protein 11 (CA11).